An 82-amino-acid polypeptide reads, in one-letter code: Small ribosomal subunit protein bS16 (82 aa).

The protein belongs to the bacterial ribosomal protein bS16 family.

This Pectobacterium carotovorum subsp. carotovorum (strain PC1) protein is Small ribosomal subunit protein bS16.